A 165-amino-acid chain; its full sequence is Transmembrane protein 128 (165 aa).

Transmembrane regions (helical) follow at residues 49–69 (NIHSGFWILASIVVTYYVDFF), 81–101 (WFLFGSALLLVSVSIAFYCIV), 119–139 (LIPITTATFIVAGICFNVALW), and 144–164 (FFTPVLLFTQFMGVVMLTSLL).

It localises to the membrane. This is Transmembrane protein 128 (TMEM128) from Bos taurus (Bovine).